The chain runs to 608 residues: Probable methyltransferase PMT3 (608 aa).

The Cytoplasmic segment spans residues 1–12 (MKGRSDGGQKKR). Residues 13 to 33 (VIALVCVAAVVLVFVYLFYGS) form a helical; Signal-anchor for type II membrane protein membrane-spanning segment. The Lumenal portion of the chain corresponds to 34 to 608 (SDHRASAIEY…LTSESLRDME (575 aa)). The N-linked (GlcNAc...) asparagine glycan is linked to N342.

It belongs to the methyltransferase superfamily.

It is found in the golgi apparatus membrane. The protein is Probable methyltransferase PMT3 of Arabidopsis thaliana (Mouse-ear cress).